Consider the following 271-residue polypeptide: Small ribosomal subunit protein uS2 (271 aa).

Residues 235–271 (FDAKNPLKPQNYNAPNKRPYQDSPRKPSYQNQNQNQI) are disordered. A compositionally biased stretch (polar residues) spans 262-271 (SYQNQNQNQI).

This sequence belongs to the universal ribosomal protein uS2 family.

The sequence is that of Small ribosomal subunit protein uS2 from Onion yellows phytoplasma (strain OY-M).